Reading from the N-terminus, the 139-residue chain is Translation initiation factor 2 subunit beta (139 aa).

Belongs to the eIF-2-beta/eIF-5 family. Heterotrimer composed of an alpha, a beta and a gamma chain.

EIF-2 functions in the early steps of protein synthesis by forming a ternary complex with GTP and initiator tRNA. The chain is Translation initiation factor 2 subunit beta from Saccharolobus solfataricus (strain ATCC 35092 / DSM 1617 / JCM 11322 / P2) (Sulfolobus solfataricus).